The sequence spans 473 residues: Sensor histidine kinase YclK (473 aa).

The Cytoplasmic segment spans residues 1 to 9; sequence MMKIKYLYQ. A helical transmembrane segment spans residues 10 to 30; sequence LLLSHISILILAFVIIISLFS. Residues 31 to 164 lie on the Extracellular side of the membrane; that stretch reads HFVKEFAYQN…GVEQMVNQVN (134 aa). A helical transmembrane segment spans residues 165-185; that stretch reads LYMFYAVISTLVITILVSWLL. The Cytoplasmic segment spans residues 186-473; the sequence is SKFHVKRIQK…IRLPLTAKQQ (288 aa). The HAMP domain occupies 187–239; it reads KFHVKRIQKLREATDKVASGDYDIHLENSYGDEIGVLASDFNIMAKKLKQSRD. In terms of domain architecture, Histidine kinase spans 254-470; sequence DVSHELKTPL…KFIIRLPLTA (217 aa). His257 carries the phosphohistidine; by autocatalysis modification.

The protein localises to the cell membrane. It carries out the reaction ATP + protein L-histidine = ADP + protein N-phospho-L-histidine.. Could be member of the two-component regulatory system YclK/YclJ. Potentially phosphorylates YclJ. The sequence is that of Sensor histidine kinase YclK (yclK) from Bacillus subtilis (strain 168).